A 118-amino-acid chain; its full sequence is MNNKEIGKLGEDFTVEFLSSRGFIVLERNYKVSFGEIDIIARKGDILIFVEVKTRRNLDFGMPVESVSFEKQNRIKKIAEIYVKNKQLRFKEIRFDIMSIILSPKGEVLNWEYLPNAF.

Belongs to the UPF0102 family.

This is UPF0102 protein Dtur_1530 from Dictyoglomus turgidum (strain DSM 6724 / Z-1310).